We begin with the raw amino-acid sequence, 287 residues long: Phosphatidylserine decarboxylase proenzyme (287 aa).

Active-site charge relay system; for autoendoproteolytic cleavage activity residues include Asp90, His147, and Ser252. Ser252 acts as the Schiff-base intermediate with substrate; via pyruvic acid; for decarboxylase activity in catalysis. Ser252 carries the pyruvic acid (Ser); by autocatalysis modification.

Belongs to the phosphatidylserine decarboxylase family. PSD-B subfamily. Prokaryotic type I sub-subfamily. As to quaternary structure, heterodimer of a large membrane-associated beta subunit and a small pyruvoyl-containing alpha subunit. Pyruvate serves as cofactor. Is synthesized initially as an inactive proenzyme. Formation of the active enzyme involves a self-maturation process in which the active site pyruvoyl group is generated from an internal serine residue via an autocatalytic post-translational modification. Two non-identical subunits are generated from the proenzyme in this reaction, and the pyruvate is formed at the N-terminus of the alpha chain, which is derived from the carboxyl end of the proenzyme. The autoendoproteolytic cleavage occurs by a canonical serine protease mechanism, in which the side chain hydroxyl group of the serine supplies its oxygen atom to form the C-terminus of the beta chain, while the remainder of the serine residue undergoes an oxidative deamination to produce ammonia and the pyruvoyl prosthetic group on the alpha chain. During this reaction, the Ser that is part of the protease active site of the proenzyme becomes the pyruvoyl prosthetic group, which constitutes an essential element of the active site of the mature decarboxylase.

It localises to the cell membrane. The enzyme catalyses a 1,2-diacyl-sn-glycero-3-phospho-L-serine + H(+) = a 1,2-diacyl-sn-glycero-3-phosphoethanolamine + CO2. The protein operates within phospholipid metabolism; phosphatidylethanolamine biosynthesis; phosphatidylethanolamine from CDP-diacylglycerol: step 2/2. Catalyzes the formation of phosphatidylethanolamine (PtdEtn) from phosphatidylserine (PtdSer). The sequence is that of Phosphatidylserine decarboxylase proenzyme from Pseudomonas putida (strain W619).